We begin with the raw amino-acid sequence, 551 residues long: Oleuropein beta-glucosidase (551 aa).

Polar residues predominate over residues 1–27 (MDIQSNVLTITSGSTPTDTSSNGQAAK). Residues 1–33 (MDIQSNVLTITSGSTPTDTSSNGQAAKSTKERI) form a disordered region. A beta-D-glucoside is bound by residues Q52, H156, 201–202 (NE), Y363, E433, W482, 489–490 (EW), and F498. The active-site Proton donor is the E202. The active-site Nucleophile is the E433. Residues 502–551 (YVDYANGRYTRLPKRSAVWWRNFLTKPTAVPLKNEPEKSEDRRKRLRGST) are required for the homomultimerization. The tract at residues 532–551 (PLKNEPEKSEDRRKRLRGST) is disordered. Residues 535-544 (NEPEKSEDRR) show a composition bias toward basic and acidic residues. The Nuclear localization signal signature appears at 542–550 (DRRKRLRGS).

Belongs to the glycosyl hydrolase 1 family. As to quaternary structure, homomultimer. Native form of the enzyme requires at least an octamer conformation. As to expression, expressed in expanding leaves and in young drupes, mostly in the developing seed coat tissues, the perisperm and the mesocarp. Also detected in shoot and root meristems, flower buds, developing ovaries and tapetal cells of the anther. Not detected in embryos or endosperm, or in leaf trichomes.

It localises to the nucleus. It catalyses the reaction oleuropein + H2O = oleuropein aglycone + D-glucose. In terms of biological role, major beta-glucosidase activating oleuropein into a potent protein cross-linking agent. No activity with rutin, luteolin or p-nitrophenyl-beta-glucopyranoside as substrates. This is Oleuropein beta-glucosidase from Olea europaea (Common olive).